The chain runs to 158 residues: Transcriptional repressor NrdR (158 aa).

The segment at 3–34 (CPFCGNADTQVVDSRVSEEGDTIRRRRRCLSC) is a zinc-finger region. The 91-residue stretch at 49–139 (PSVVKRNGSR…VYKNFEDIGE (91 aa)) folds into the ATP-cone domain.

This sequence belongs to the NrdR family. Zn(2+) serves as cofactor.

Negatively regulates transcription of bacterial ribonucleotide reductase nrd genes and operons by binding to NrdR-boxes. This Bordetella petrii (strain ATCC BAA-461 / DSM 12804 / CCUG 43448) protein is Transcriptional repressor NrdR.